The following is an 85-amino-acid chain: Large ribosomal subunit protein bL27 (85 aa).

The segment at 1 to 20 (MATKKAGGSTKNGRDSNPKM) is disordered.

It belongs to the bacterial ribosomal protein bL27 family.

This Acinetobacter baumannii (strain AB307-0294) protein is Large ribosomal subunit protein bL27.